The chain runs to 213 residues: ATP phosphoribosyltransferase (213 aa).

The protein belongs to the ATP phosphoribosyltransferase family. Short subfamily. In terms of assembly, heteromultimer composed of HisG and HisZ subunits.

It is found in the cytoplasm. It catalyses the reaction 1-(5-phospho-beta-D-ribosyl)-ATP + diphosphate = 5-phospho-alpha-D-ribose 1-diphosphate + ATP. It participates in amino-acid biosynthesis; L-histidine biosynthesis; L-histidine from 5-phospho-alpha-D-ribose 1-diphosphate: step 1/9. Catalyzes the condensation of ATP and 5-phosphoribose 1-diphosphate to form N'-(5'-phosphoribosyl)-ATP (PR-ATP). Has a crucial role in the pathway because the rate of histidine biosynthesis seems to be controlled primarily by regulation of HisG enzymatic activity. The chain is ATP phosphoribosyltransferase from Teredinibacter turnerae (strain ATCC 39867 / T7901).